A 420-amino-acid chain; its full sequence is 3-oxoacyl-[acyl-carrier-protein] synthase 2 (420 aa).

The region spanning 13–419 (FPNVVVTGIA…GHNVAIAFGC (407 aa)) is the Ketosynthase family 3 (KS3) domain. Residues C173, H314, and H349 each act as for beta-ketoacyl synthase activity in the active site.

This sequence belongs to the thiolase-like superfamily. Beta-ketoacyl-ACP synthases family.

The protein resides in the cytoplasm. The enzyme catalyses an ultra-long-chain di-unsaturated fatty acyl-[ACP] + malonyl-[ACP] + H(+) = a 3-oxo-ultra-long-chain di-unsaturated fatty acyl-[ACP] + holo-[ACP] + CO2. Its pathway is lipid metabolism; mycolic acid biosynthesis. Its function is as follows. Part of the mycobacterial fatty acid elongation system FAS-II, which is involved in mycolic acid biosynthesis. Catalyzes the elongation of long chain acyl-ACP substrates by the addition of two carbons from malonyl-ACP to an acyl acceptor. Involved in extension of the mycolate chains to full lengths and produces longer chain multiunsaturated hydrocarbons averaging 54 carbons in length. The polypeptide is 3-oxoacyl-[acyl-carrier-protein] synthase 2 (kasB) (Mycobacterium leprae (strain TN)).